A 115-amino-acid chain; its full sequence is Secreted RxLR effector protein 2 (115 aa).

Positions 1–22 are cleaved as a signal peptide; sequence MICRSPLIVVMLFVIAAHTVLA. The RxLR-dEER motif lies at 57 to 82; sequence RFLRQETTFEKKLGVNDVHAVHAEER.

Belongs to the RxLR effector family.

It is found in the secreted. Its subcellular location is the host cytoplasm. It localises to the host nucleus. Effector that acts as a broad suppressor of cell death to interrupt plant immunity. Inhibits cell death induced by cell death-inducing proteins, including the PAMP elicitor INF1 from P.infestans. The protein is Secreted RxLR effector protein 2 of Plasmopara viticola (Downy mildew of grapevine).